The sequence spans 267 residues: Transcription factor Spi-B (267 aa).

The tract at residues 1-31 (MLALEAAQLDGPHLSCLYPEGVFYDLDSCKP) is TAD1 (Acidic). The interval 41–62 (LDSTWGWTEAPPAPAIAPYEAF) is TAD2. The ETS DNA-binding region spans 174–257 (LRLYQFLLGL…VKRKLTYQFD (84 aa)).

This sequence belongs to the ETS family. Can form homotypic interactions. Interacts with IRF4/Pip. Interacts with JUN. Interacts with TBP. May also interact with CREBBP and EP300. Interacts with NONO/p54(nrb). In terms of tissue distribution, expressed in the medulla of the thymus, the spleen and germinal centers of the lymph nodes. Expressed in B-cells and T-cells, expression increases during B-cell maturation and decreases during T-cell maturation.

Its subcellular location is the nucleus. Its function is as follows. Sequence specific transcriptional activator which binds to the PU-box, a purine-rich DNA sequence (5'-GAGGAA-3') that can act as a lymphoid-specific enhancer. Promotes development of plasmacytoid dendritic cells (pDCs), also known as type 2 DC precursors (pre-DC2) or natural interferon (IFN)-producing cells. These cells have the capacity to produce large amounts of interferon and block viral replication. Required for B-cell receptor (BCR) signaling, which is necessary for normal B-cell development and antigenic stimulation. This is Transcription factor Spi-B (Spib) from Mus musculus (Mouse).